Reading from the N-terminus, the 768-residue chain is Vitamin B12-dependent ribonucleoside-diphosphate reductase (768 aa).

Residues Lys-3 to Arg-97 enclose the ATP-cone domain. Residues Ser-234, Ala-249 to Cys-250, Gly-278, Asn-432 to Glu-436, and Pro-579 to Ile-583 each bind substrate. Cys-250 and Cys-445 form a disulfide bridge. Asn-432 (proton acceptor) is an active-site residue. Cys-434 serves as the catalytic Cysteine radical intermediate. Glu-436 acts as the Proton acceptor in catalysis.

This sequence belongs to the ribonucleoside diphosphate reductase class-2 family. Monomer. Adenosylcob(III)alamin serves as cofactor.

It catalyses the reaction a 2'-deoxyribonucleoside 5'-diphosphate + [thioredoxin]-disulfide + H2O = a ribonucleoside 5'-diphosphate + [thioredoxin]-dithiol. Provides the precursors necessary for DNA synthesis. Catalyzes the biosynthesis of deoxyribonucleotides from the corresponding ribonucleotides. This chain is Vitamin B12-dependent ribonucleoside-diphosphate reductase, found in Thermoplasma acidophilum (strain ATCC 25905 / DSM 1728 / JCM 9062 / NBRC 15155 / AMRC-C165).